We begin with the raw amino-acid sequence, 210 residues long: Probable GTP-binding protein EngB (210 aa).

The EngB-type G domain maps to 25–199 (TGIEVAFAGR…RQKLDTWFSE (175 aa)). Residues 33–40 (GRSNAGKS), 60–64 (GRTQL), 78–81 (DLPG), 145–148 (TKAD), and 178–180 (FSS) contribute to the GTP site. Residues S40 and T62 each coordinate Mg(2+).

The protein belongs to the TRAFAC class TrmE-Era-EngA-EngB-Septin-like GTPase superfamily. EngB GTPase family. The cofactor is Mg(2+).

Necessary for normal cell division and for the maintenance of normal septation. The sequence is that of Probable GTP-binding protein EngB from Escherichia coli O6:H1 (strain CFT073 / ATCC 700928 / UPEC).